The chain runs to 90 residues: Small ribosomal subunit protein uS15c (90 aa).

This sequence belongs to the universal ribosomal protein uS15 family. As to quaternary structure, part of the 30S ribosomal subunit.

It is found in the plastid. The protein resides in the chloroplast. This Daucus carota (Wild carrot) protein is Small ribosomal subunit protein uS15c (rps15).